We begin with the raw amino-acid sequence, 165 residues long: Chorismate pyruvate-lyase (165 aa).

Positions 77, 115, and 156 each coordinate substrate.

It belongs to the UbiC family. As to quaternary structure, monomer.

It localises to the cytoplasm. It carries out the reaction chorismate = 4-hydroxybenzoate + pyruvate. Its pathway is cofactor biosynthesis; ubiquinone biosynthesis. Functionally, removes the pyruvyl group from chorismate, with concomitant aromatization of the ring, to provide 4-hydroxybenzoate (4HB) for the ubiquinone pathway. This is Chorismate pyruvate-lyase from Salmonella typhi.